The sequence spans 968 residues: Serine/threonine-protein kinase apg-1 (968 aa).

The Protein kinase domain occupies 24 to 329; it reads FVIDQEIGKG…FEDLFNHPVV (306 aa). Residues 30-38 and Lys-53 each bind ATP; that span reads IGKGSFAKV. Asp-167 (proton acceptor) is an active-site residue. Disordered stretches follow at residues 334–500, 528–585, 884–906, and 939–968; these read PGLV…ERAA, MYPQ…LGTS, LPKR…LSDE, and ASKA…SVPA. 3 stretches are compositionally biased toward basic and acidic residues: residues 350-361, 371-380, and 417-431; these read LKEERPVSRAED, LRKDLADREG, and PRED…KEAA. Polar residues-rich tracts occupy residues 441-452, 528-538, and 545-557; these read VQPSTSAPTRPS, MYPQQPQSPKS, and ATQQ…TSGA.

It belongs to the protein kinase superfamily. Ser/Thr protein kinase family. APG1/unc-51/ULK1 subfamily. As to quaternary structure, homodimer. Forms a ternary complex with ATG13 and ATG17.

It localises to the cytoplasm. It is found in the preautophagosomal structure membrane. It carries out the reaction L-seryl-[protein] + ATP = O-phospho-L-seryl-[protein] + ADP + H(+). It catalyses the reaction L-threonyl-[protein] + ATP = O-phospho-L-threonyl-[protein] + ADP + H(+). Its function is as follows. Serine/threonine protein kinase involved in the cytoplasm to vacuole transport (Cvt) and found to be essential in autophagy, where it is required for the formation of autophagosomes. Involved in the clearance of protein aggregates which cannot be efficiently cleared by the proteasome. Required for selective autophagic degradation of the nucleus (nucleophagy) as well as for mitophagy which contributes to regulate mitochondrial quantity and quality by eliminating the mitochondria to a basal level to fulfill cellular energy requirements and preventing excess ROS production. Also involved in endoplasmic reticulum-specific autophagic process, in selective removal of ER-associated degradation (ERAD) substrates. Plays a key role in ATG9 and ATG23 cycling through the pre-autophagosomal structure and is necessary to promote ATG18 binding to ATG9 through phosphorylation of ATG9. Catalyzes phosphorylation of ATG4, decreasing the interaction between ATG4 and ATG8 and impairing deconjugation of PE-conjugated forms of ATG8. This chain is Serine/threonine-protein kinase apg-1, found in Neurospora crassa (strain ATCC 24698 / 74-OR23-1A / CBS 708.71 / DSM 1257 / FGSC 987).